The chain runs to 328 residues: Ubiquitin-conjugating enzyme E2 Z (328 aa).

One can recognise a UBC core domain in the interval 71-225; that stretch reads QCILRIKRDI…IRHETMRVAV (155 aa). Catalysis depends on Cys160, which acts as the Glycyl thioester intermediate. The interval 295–328 is disordered; that stretch reads RLREKCPPEDNDGDSDSDTSSSGTDPDSQGSSQP. Low complexity predominate over residues 312–328; the sequence is DTSSSGTDPDSQGSSQP.

Belongs to the ubiquitin-conjugating enzyme family.

The protein localises to the cytoplasm. It is found in the nucleus. It carries out the reaction S-ubiquitinyl-[E1 ubiquitin-activating enzyme]-L-cysteine + [E2 ubiquitin-conjugating enzyme]-L-cysteine = [E1 ubiquitin-activating enzyme]-L-cysteine + S-ubiquitinyl-[E2 ubiquitin-conjugating enzyme]-L-cysteine.. Its pathway is protein modification; protein ubiquitination. Catalyzes the covalent attachment of ubiquitin to other proteins. May be involved in apoptosis regulation. This Danio rerio (Zebrafish) protein is Ubiquitin-conjugating enzyme E2 Z (ube2z).